The chain runs to 427 residues: Trigger factor (427 aa).

Residues G163–P248 enclose the PPIase FKBP-type domain.

This sequence belongs to the FKBP-type PPIase family. Tig subfamily.

The protein resides in the cytoplasm. It catalyses the reaction [protein]-peptidylproline (omega=180) = [protein]-peptidylproline (omega=0). In terms of biological role, involved in protein export. Acts as a chaperone by maintaining the newly synthesized protein in an open conformation. Functions as a peptidyl-prolyl cis-trans isomerase. In Enterococcus faecalis (strain ATCC 700802 / V583), this protein is Trigger factor.